Consider the following 338-residue polypeptide: uncharacterized protein (338 aa).

An N-terminal signal peptide occupies residues Met-1 to Ala-29.

Belongs to the aerolysin family.

This is an uncharacterized protein from Staphylococcus aureus (strain bovine RF122 / ET3-1).